A 409-amino-acid chain; its full sequence is 1-deoxy-D-xylulose 5-phosphate reductoisomerase (409 aa).

NADPH contacts are provided by Thr-10, Gly-11, Ser-12, Ile-13, Gly-36, Arg-37, Asn-38, and Asn-126. Lys-127 provides a ligand contact to 1-deoxy-D-xylulose 5-phosphate. Residue Glu-128 participates in NADPH binding. Asp-152 serves as a coordination point for Mn(2+). 1-deoxy-D-xylulose 5-phosphate contacts are provided by Ser-153, Glu-154, Ser-190, and His-213. Residue Glu-154 participates in Mn(2+) binding. Gly-219 contacts NADPH. The 1-deoxy-D-xylulose 5-phosphate site is built by Ser-226, Asn-231, Lys-232, and Glu-235. Glu-235 provides a ligand contact to Mn(2+).

It belongs to the DXR family. Requires Mg(2+) as cofactor. It depends on Mn(2+) as a cofactor.

The catalysed reaction is 2-C-methyl-D-erythritol 4-phosphate + NADP(+) = 1-deoxy-D-xylulose 5-phosphate + NADPH + H(+). The protein operates within isoprenoid biosynthesis; isopentenyl diphosphate biosynthesis via DXP pathway; isopentenyl diphosphate from 1-deoxy-D-xylulose 5-phosphate: step 1/6. In terms of biological role, catalyzes the NADPH-dependent rearrangement and reduction of 1-deoxy-D-xylulose-5-phosphate (DXP) to 2-C-methyl-D-erythritol 4-phosphate (MEP). The chain is 1-deoxy-D-xylulose 5-phosphate reductoisomerase from Prochlorococcus marinus (strain MIT 9515).